A 910-amino-acid polypeptide reads, in one-letter code: DnaJ-like protein MG200 homolog (910 aa).

The J domain maps to 4-73 (AKRDYYEVLG…RANYDKYGHD (70 aa)). Disordered regions lie at residues 102 to 160 (DNLS…DDIP), 260 to 408 (TEPS…LEQD), and 451 to 486 (VLSD…STAP). A compositionally biased stretch (basic residues) spans 111 to 121 (KKEKTKTKKKG). Over residues 273-283 (DSDAVTAATTV) the composition is skewed to low complexity. Residues 357–379 (SDEADATNEPTEQDTISEPEQET) show a composition bias toward acidic residues. Over residues 451-462 (VLSDQNPNPQTP) the composition is skewed to polar residues.

The polypeptide is DnaJ-like protein MG200 homolog (Mycoplasma pneumoniae (strain ATCC 29342 / M129 / Subtype 1) (Mycoplasmoides pneumoniae)).